We begin with the raw amino-acid sequence, 248 residues long: Deoxyribose-phosphate aldolase (248 aa).

The Proton donor/acceptor role is filled by aspartate 117. The active-site Schiff-base intermediate with acetaldehyde is lysine 179. Catalysis depends on lysine 208, which acts as the Proton donor/acceptor.

This sequence belongs to the DeoC/FbaB aldolase family. DeoC type 1 subfamily.

Its subcellular location is the cytoplasm. It carries out the reaction 2-deoxy-D-ribose 5-phosphate = D-glyceraldehyde 3-phosphate + acetaldehyde. It functions in the pathway carbohydrate degradation; 2-deoxy-D-ribose 1-phosphate degradation; D-glyceraldehyde 3-phosphate and acetaldehyde from 2-deoxy-alpha-D-ribose 1-phosphate: step 2/2. Catalyzes a reversible aldol reaction between acetaldehyde and D-glyceraldehyde 3-phosphate to generate 2-deoxy-D-ribose 5-phosphate. The sequence is that of Deoxyribose-phosphate aldolase from Thermotoga petrophila (strain ATCC BAA-488 / DSM 13995 / JCM 10881 / RKU-1).